The chain runs to 264 residues: Ferric siderophore reductase (264 aa).

The region spanning 9-127 (SPTRLTYISD…PGPLKMNRFD (119 aa)) is the FAD-binding FR-type domain. Residues Arg-73, Ser-74, Thr-76, Asp-90, Val-92, His-96, Ala-100, Thr-101, Lys-247, Asn-249, Thr-250, and Ala-252 each contribute to the FAD site.

This sequence belongs to the SIP oxidoreductase family. FAD serves as cofactor.

Its function is as follows. Ferric-siderophore reductase involved in iron removal from the siderophores after their transport into the cell. Catalyzes the reduction of the ferric iron bound to the hydroxamate siderophores produced by Shewanella to ferrous iron. Can use a ferredoxin as electron donor. Despite the clear evidence for the interaction with NAD(P)H, no direct reduction of the enzyme by these compounds is observed, nor consumption of NAD(P)H, suggesting that NADH and NADPH are not the physiological electron donors. In Shewanella frigidimarina (strain NCIMB 400), this protein is Ferric siderophore reductase.